Reading from the N-terminus, the 194-residue chain is Coiled-coil domain-containing protein 184 (194 aa).

Positions 39-68 (GMKELMEHLKAQLQALFEDVRAMRGALDEQ) form a coiled coil. Residues 101 to 176 (GLGVVGGKGS…LLGGDGPLVE (76 aa)) form a disordered region. Positions 135 to 145 (PEDEEEEEEEK) are enriched in acidic residues.

The protein is Coiled-coil domain-containing protein 184 (CCDC184) of Homo sapiens (Human).